The following is a 284-amino-acid chain: tRNA (guanine-N(7)-)-methyltransferase (284 aa).

S-adenosyl-L-methionine-binding positions include Gly102, 125–126 (EI), 160–161 (NT), and Cys180. Asp183 is a catalytic residue. Position 258–260 (258–260 (TEE)) interacts with S-adenosyl-L-methionine.

The protein belongs to the class I-like SAM-binding methyltransferase superfamily. TrmB family. Forms a complex with TRM82.

The protein resides in the nucleus. It carries out the reaction guanosine(46) in tRNA + S-adenosyl-L-methionine = N(7)-methylguanosine(46) in tRNA + S-adenosyl-L-homocysteine. It participates in tRNA modification; N(7)-methylguanine-tRNA biosynthesis. Catalyzes the formation of N(7)-methylguanine at position 46 (m7G46) in tRNA. The chain is tRNA (guanine-N(7)-)-methyltransferase from Podospora anserina (strain S / ATCC MYA-4624 / DSM 980 / FGSC 10383) (Pleurage anserina).